The following is a 248-amino-acid chain: Adenosylcobinamide-GDP ribazoletransferase (248 aa).

6 consecutive transmembrane segments (helical) span residues 36–56 (FFLPVVASIIGGMEFLIYLGL), 59–79 (FLPSNVIIVLLLLFTAMITGG), 114–134 (GTIALIIDLLLKYQLLYSLVL), 137–157 (YSIAIFLAPIIGRISILFLCL), 170–190 (IFIGNMSKPIVFFISTIVLVL), and 199–219 (ATIIPFIGALLITYLLYLLCL).

The protein belongs to the CobS family. Mg(2+) serves as cofactor.

The protein resides in the cell membrane. It catalyses the reaction alpha-ribazole + adenosylcob(III)inamide-GDP = adenosylcob(III)alamin + GMP + H(+). The catalysed reaction is alpha-ribazole 5'-phosphate + adenosylcob(III)inamide-GDP = adenosylcob(III)alamin 5'-phosphate + GMP + H(+). It functions in the pathway cofactor biosynthesis; adenosylcobalamin biosynthesis; adenosylcobalamin from cob(II)yrinate a,c-diamide: step 7/7. Functionally, joins adenosylcobinamide-GDP and alpha-ribazole to generate adenosylcobalamin (Ado-cobalamin). Also synthesizes adenosylcobalamin 5'-phosphate from adenosylcobinamide-GDP and alpha-ribazole 5'-phosphate. The sequence is that of Adenosylcobinamide-GDP ribazoletransferase from Clostridium botulinum (strain Loch Maree / Type A3).